The primary structure comprises 427 residues: 3-deoxy-D-manno-octulosonic acid transferase (427 aa).

Residues 4–24 traverse the membrane as a helical; Signal-anchor segment; it reads FFYTSLLLICQPLILCFIGLL. Residue glutamate 62 is the Proton acceptor of the active site. CMP-binding positions include 270-271, 311-313, and 337-340; these read PR, MGE, and NPLE.

It belongs to the glycosyltransferase group 1 family. Glycosyltransferase 30 subfamily.

The protein localises to the cell inner membrane. The enzyme catalyses lipid IVA (E. coli) + CMP-3-deoxy-beta-D-manno-octulosonate = alpha-Kdo-(2-&gt;6)-lipid IVA (E. coli) + CMP + H(+). Its pathway is bacterial outer membrane biogenesis; LPS core biosynthesis. In terms of biological role, involved in lipopolysaccharide (LPS) biosynthesis. Catalyzes the transfer of a single 3-deoxy-D-manno-octulosonate (Kdo) residue from CMP-Kdo to lipid IV(A), the tetraacyldisaccharide-1,4'-bisphosphate precursor of lipid A. Is strictly monofunctional, i.e. is capable of adding only a single Kdo residue to the acceptor lipid. In Haemophilus influenzae (strain ATCC 51907 / DSM 11121 / KW20 / Rd), this protein is 3-deoxy-D-manno-octulosonic acid transferase (waaA).